The chain runs to 762 residues: 5-methyltetrahydropteroyltriglutamate--homocysteine methyltransferase (762 aa).

5-methyltetrahydropteroyltri-L-glutamate contacts are provided by residues 17 to 20 (REWK) and K111. Residues 435–437 (IGS) and E488 each bind L-homocysteine. Residues 435-437 (IGS) and E488 contribute to the L-methionine site. 5-methyltetrahydropteroyltri-L-glutamate contacts are provided by residues 519-520 (RC) and W565. L-homocysteine is bound at residue D603. D603 contributes to the L-methionine binding site. E609 provides a ligand contact to 5-methyltetrahydropteroyltri-L-glutamate. Positions 645, 647, and 669 each coordinate Zn(2+). H698 functions as the Proton donor in the catalytic mechanism. Residue C730 coordinates Zn(2+).

This sequence belongs to the vitamin-B12 independent methionine synthase family. Zn(2+) serves as cofactor.

The enzyme catalyses 5-methyltetrahydropteroyltri-L-glutamate + L-homocysteine = tetrahydropteroyltri-L-glutamate + L-methionine. The protein operates within amino-acid biosynthesis; L-methionine biosynthesis via de novo pathway; L-methionine from L-homocysteine (MetE route): step 1/1. Catalyzes the transfer of a methyl group from 5-methyltetrahydrofolate to homocysteine resulting in methionine formation. The sequence is that of 5-methyltetrahydropteroyltriglutamate--homocysteine methyltransferase from Bacillus cereus (strain AH820).